A 324-amino-acid chain; its full sequence is Adenine deaminase (324 aa).

Zn(2+) contacts are provided by H11, H13, and H189. E192 functions as the Proton donor in the catalytic mechanism. D270 is a binding site for Zn(2+). Residue D271 participates in substrate binding.

Belongs to the metallo-dependent hydrolases superfamily. Adenosine and AMP deaminases family. Adenine deaminase type 2 subfamily. Zn(2+) serves as cofactor.

The enzyme catalyses adenine + H2O + H(+) = hypoxanthine + NH4(+). Its function is as follows. Catalyzes the hydrolytic deamination of adenine to hypoxanthine. Plays an important role in the purine salvage pathway and in nitrogen catabolism. This chain is Adenine deaminase, found in Sinorhizobium fredii (strain NBRC 101917 / NGR234).